Reading from the N-terminus, the 345-residue chain is 3-isopropylmalate dehydrogenase (345 aa).

Substrate-binding residues include Arg94, Arg104, Arg132, and Asp216. Mg(2+) is bound by residues Asp216, Asp240, and Asp244. Residue 274 to 286 coordinates NAD(+); the sequence is GSAPDIAGQGIAN.

It belongs to the isocitrate and isopropylmalate dehydrogenases family. LeuB type 1 subfamily. Homodimer. The cofactor is Mg(2+). Mn(2+) is required as a cofactor.

It localises to the cytoplasm. It carries out the reaction (2R,3S)-3-isopropylmalate + NAD(+) = 4-methyl-2-oxopentanoate + CO2 + NADH. The protein operates within amino-acid biosynthesis; L-leucine biosynthesis; L-leucine from 3-methyl-2-oxobutanoate: step 3/4. Its function is as follows. Catalyzes the oxidation of 3-carboxy-2-hydroxy-4-methylpentanoate (3-isopropylmalate) to 3-carboxy-4-methyl-2-oxopentanoate. The product decarboxylates to 4-methyl-2 oxopentanoate. The sequence is that of 3-isopropylmalate dehydrogenase from Streptococcus pneumoniae (strain ATCC BAA-255 / R6).